Consider the following 323-residue polypeptide: Lipoyl synthase (323 aa).

Positions 1 to 14 (MVTILDRTKPDDKR) are enriched in basic and acidic residues. The interval 1 to 25 (MVTILDRTKPDDKRIRHPEKAHKPD) is disordered. 7 residues coordinate [4Fe-4S] cluster: C61, C66, C72, C87, C91, C94, and S300. One can recognise a Radical SAM core domain in the interval 73-289 (WEKKHATFMI…EDIAYTKGFL (217 aa)).

It belongs to the radical SAM superfamily. Lipoyl synthase family. [4Fe-4S] cluster is required as a cofactor.

The protein resides in the cytoplasm. It carries out the reaction [[Fe-S] cluster scaffold protein carrying a second [4Fe-4S](2+) cluster] + N(6)-octanoyl-L-lysyl-[protein] + 2 oxidized [2Fe-2S]-[ferredoxin] + 2 S-adenosyl-L-methionine + 4 H(+) = [[Fe-S] cluster scaffold protein] + N(6)-[(R)-dihydrolipoyl]-L-lysyl-[protein] + 4 Fe(3+) + 2 hydrogen sulfide + 2 5'-deoxyadenosine + 2 L-methionine + 2 reduced [2Fe-2S]-[ferredoxin]. It participates in protein modification; protein lipoylation via endogenous pathway; protein N(6)-(lipoyl)lysine from octanoyl-[acyl-carrier-protein]: step 2/2. In terms of biological role, catalyzes the radical-mediated insertion of two sulfur atoms into the C-6 and C-8 positions of the octanoyl moiety bound to the lipoyl domains of lipoate-dependent enzymes, thereby converting the octanoylated domains into lipoylated derivatives. The chain is Lipoyl synthase from Allorhizobium ampelinum (strain ATCC BAA-846 / DSM 112012 / S4) (Agrobacterium vitis (strain S4)).